The sequence spans 387 residues: G2/mitotic-specific cyclin-B2 (387 aa).

The protein belongs to the cyclin family. Cyclin AB subfamily. As to quaternary structure, interacts with the CDK1 protein kinase to form a serine/threonine kinase holoenzyme complex also known as maturation promoting factor (MPF). The cyclin subunit imparts substrate specificity to the complex.

Its function is as follows. Essential for the control of the cell cycle at the G2/M (mitosis) transition. The protein is G2/mitotic-specific cyclin-B2 (ccnb2) of Oryzias latipes (Japanese rice fish).